Reading from the N-terminus, the 235-residue chain is Regulator of G-protein signaling 18 (235 aa).

At Ser-49 the chain carries Phosphoserine. One can recognise an RGS domain in the interval 86 to 202; sequence SFDKLLSHRD…LKSEIYLHLI (117 aa). Residues Ser-216 and Ser-218 each carry the phosphoserine modification.

It is found in the cytoplasm. Inhibits signal transduction by increasing the GTPase activity of G protein alpha subunits thereby driving them into their inactive GDP-bound form. Binds to G(i) alpha-1, G(i) alpha-2, G(i) alpha-3 and G(q) alpha. This is Regulator of G-protein signaling 18 (Rgs18) from Rattus norvegicus (Rat).